The chain runs to 876 residues: Leucine--tRNA ligase (876 aa).

Positions 43–53 match the 'HIGH' region motif; it reads PYPSGRIHMGH. The short motif at 630-634 is the 'KMSKS' region element; it reads KMSKS. An ATP-binding site is contributed by Lys-633.

It belongs to the class-I aminoacyl-tRNA synthetase family.

Its subcellular location is the cytoplasm. The enzyme catalyses tRNA(Leu) + L-leucine + ATP = L-leucyl-tRNA(Leu) + AMP + diphosphate. The chain is Leucine--tRNA ligase from Methylocella silvestris (strain DSM 15510 / CIP 108128 / LMG 27833 / NCIMB 13906 / BL2).